A 325-amino-acid chain; its full sequence is Beta-ketoacyl-[acyl-carrier-protein] synthase III (325 aa).

Active-site residues include C119 and H252. The ACP-binding stretch occupies residues 253-257 (QANIR). Residue N282 is part of the active site.

The protein belongs to the thiolase-like superfamily. FabH family. As to quaternary structure, homodimer.

It is found in the cytoplasm. The catalysed reaction is malonyl-[ACP] + acetyl-CoA + H(+) = 3-oxobutanoyl-[ACP] + CO2 + CoA. The protein operates within lipid metabolism; fatty acid biosynthesis. Its function is as follows. Catalyzes the condensation reaction of fatty acid synthesis by the addition to an acyl acceptor of two carbons from malonyl-ACP. Catalyzes the first condensation reaction which initiates fatty acid synthesis and may therefore play a role in governing the total rate of fatty acid production. Possesses both acetoacetyl-ACP synthase and acetyl transacylase activities. Its substrate specificity determines the biosynthesis of branched-chain and/or straight-chain of fatty acids. This is Beta-ketoacyl-[acyl-carrier-protein] synthase III from Variovorax paradoxus (strain S110).